The primary structure comprises 331 residues: Serpentine receptor class alpha-9 (331 aa).

7 helical membrane passes run 26–46 (IDLL…QLVL), 58–78 (LILE…IEAI), 104–124 (YLKV…GLMI), 142–162 (IIGF…GKLF), 189–209 (YFTV…LLKI), 238–258 (VCFL…GVGA), and 275–295 (LCVV…LLLI).

This sequence belongs to the nematode receptor-like protein sra family.

The protein resides in the membrane. The chain is Serpentine receptor class alpha-9 (sra-9) from Caenorhabditis elegans.